The primary structure comprises 390 residues: Serpin B3 (390 aa).

Residue M1 is modified to N-acetylmethionine.

This sequence belongs to the serpin family. Ov-serpin subfamily. In terms of assembly, interacts with MAPK8/JNK1. As to expression, squamous cells. Expressed in some hepatocellular carcinoma (at protein level).

Its subcellular location is the cytoplasm. In terms of biological role, may act as a papain-like cysteine protease inhibitor to modulate the host immune response against tumor cells. Also functions as an inhibitor of UV-induced apoptosis via suppression of the activity of c-Jun NH(2)-terminal kinase (JNK1). The protein is Serpin B3 (SERPINB3) of Homo sapiens (Human).